A 504-amino-acid chain; its full sequence is ATP synthase subunit alpha, chloroplastic (504 aa).

An ATP-binding site is contributed by 170–177 (GDRQTGKT).

This sequence belongs to the ATPase alpha/beta chains family. As to quaternary structure, F-type ATPases have 2 components, CF(1) - the catalytic core - and CF(0) - the membrane proton channel. CF(1) has five subunits: alpha(3), beta(3), gamma(1), delta(1), epsilon(1). CF(0) has four main subunits: a, b, b' and c.

The protein localises to the plastid. It localises to the chloroplast thylakoid membrane. It carries out the reaction ATP + H2O + 4 H(+)(in) = ADP + phosphate + 5 H(+)(out). Its function is as follows. Produces ATP from ADP in the presence of a proton gradient across the membrane. The alpha chain is a regulatory subunit. This is ATP synthase subunit alpha, chloroplastic from Porphyra purpurea (Red seaweed).